Consider the following 489-residue polypeptide: Glycogen synthase (489 aa).

Lys15 is a binding site for ADP-alpha-D-glucose.

Belongs to the glycosyltransferase 1 family. Bacterial/plant glycogen synthase subfamily.

It catalyses the reaction [(1-&gt;4)-alpha-D-glucosyl](n) + ADP-alpha-D-glucose = [(1-&gt;4)-alpha-D-glucosyl](n+1) + ADP + H(+). It participates in glycan biosynthesis; glycogen biosynthesis. Functionally, synthesizes alpha-1,4-glucan chains using ADP-glucose. This is Glycogen synthase from Francisella tularensis subsp. novicida (strain U112).